The following is a 73-amino-acid chain: Translational regulator CsrA (73 aa).

The interval 54–73 (ENRAASDSPWSPNSLPQLPV) is disordered. The span at 61–73 (SPWSPNSLPQLPV) shows a compositional bias: polar residues.

This sequence belongs to the CsrA/RsmA family. As to quaternary structure, homodimer; the beta-strands of each monomer intercalate to form a hydrophobic core, while the alpha-helices form wings that extend away from the core.

The protein localises to the cytoplasm. Its function is as follows. A translational regulator that binds mRNA to regulate translation initiation and/or mRNA stability. Usually binds in the 5'-UTR at or near the Shine-Dalgarno sequence preventing ribosome-binding, thus repressing translation. Its main target seems to be the major flagellin gene, while its function is anatagonized by FliW. The protein is Translational regulator CsrA of Treponema pallidum (strain Nichols).